A 571-amino-acid chain; its full sequence is Medium/long-chain-fatty-acid--CoA ligase FadD8 (571 aa).

The interval methionine 1–valine 22 is disordered.

This sequence belongs to the ATP-dependent AMP-binding enzyme family.

The catalysed reaction is a medium-chain fatty acid + ATP + CoA = a medium-chain fatty acyl-CoA + AMP + diphosphate. It carries out the reaction a long-chain fatty acid + ATP + CoA = a long-chain fatty acyl-CoA + AMP + diphosphate. The enzyme catalyses hexanoate + ATP + CoA = hexanoyl-CoA + AMP + diphosphate. It catalyses the reaction dodecanoate + ATP + CoA = dodecanoyl-CoA + AMP + diphosphate. The catalysed reaction is hexadecanoate + ATP + CoA = hexadecanoyl-CoA + AMP + diphosphate. Its pathway is lipid metabolism; fatty acid metabolism. Catalyzes the activation of medium/long-chain fatty acids as acyl-coenzyme A (acyl-CoA). The chain is Medium/long-chain-fatty-acid--CoA ligase FadD8 from Mycobacterium tuberculosis (strain ATCC 25618 / H37Rv).